The primary structure comprises 79 residues: MKTLLLTLVMVTIMCLDLGYTLTCYKRYFDTVVCKPQETICYRYIIPATHGNAITYRGCSTSCPSGIRLVCCSTDLCNK.

An N-terminal signal peptide occupies residues M1 to T21. Cystine bridges form between C24–C41, C34–C59, C63–C71, and C72–C77.

It belongs to the three-finger toxin family. Short-chain subfamily. Type III alpha-neurotoxin sub-subfamily. As to expression, expressed by the venom gland.

It is found in the secreted. Binds with high affinity to muscle nicotinic acetylcholine receptor (nAChR) and hinders acetylcholine binding to the receptor, thereby impairing neuromuscular transmission. Competes with the binding of alpha-bungarotoxin on muscle AChR (from Torpedo) (IC(50)=0.30 uM). In vivo, causes muscle paralysis, spasms and increased respiration. The chain is Short neurotoxin 7 from Pseudonaja textilis (Eastern brown snake).